The primary structure comprises 308 residues: Ribonuclease Z (308 aa).

Zn(2+) is bound by residues histidine 61, histidine 63, aspartate 65, histidine 66, histidine 139, aspartate 210, and histidine 268. The active-site Proton acceptor is the aspartate 65.

This sequence belongs to the RNase Z family. In terms of assembly, homodimer. Zn(2+) is required as a cofactor.

It carries out the reaction Endonucleolytic cleavage of RNA, removing extra 3' nucleotides from tRNA precursor, generating 3' termini of tRNAs. A 3'-hydroxy group is left at the tRNA terminus and a 5'-phosphoryl group is left at the trailer molecule.. Its function is as follows. Zinc phosphodiesterase, which displays some tRNA 3'-processing endonuclease activity. Probably involved in tRNA maturation, by removing a 3'-trailer from precursor tRNA. The chain is Ribonuclease Z from Natronomonas pharaonis (strain ATCC 35678 / DSM 2160 / CIP 103997 / JCM 8858 / NBRC 14720 / NCIMB 2260 / Gabara) (Halobacterium pharaonis).